The sequence spans 103 residues: Large ribosomal subunit protein bL21 (103 aa).

This sequence belongs to the bacterial ribosomal protein bL21 family. Part of the 50S ribosomal subunit. Contacts protein L20.

Its function is as follows. This protein binds to 23S rRNA in the presence of protein L20. The polypeptide is Large ribosomal subunit protein bL21 (Methylibium petroleiphilum (strain ATCC BAA-1232 / LMG 22953 / PM1)).